The chain runs to 1940 residues: Cilia- and flagella-associated protein 74 (1940 aa).

The disordered stretch occupies residues 52 to 90; the sequence is GSPAVTLRRAKAAAAANGTSSPGIRGSPSPARGPGGRLP. Over residues 63–90 the composition is skewed to low complexity; sequence AAAAANGTSSPGIRGSPSPARGPGGRLP. The stretch at 100 to 159 forms a coiled coil; the sequence is ANVEQLKRRLQTVVAEVEGHQQRYDKVLLEANKATDLVHSMEAEIESLYVEAEELARRVP. 5 disordered regions span residues 512–548, 1159–1336, 1373–1418, 1714–1737, and 1894–1940; these read VAGL…QSLT, SPHV…AAAE, PQSQ…AAPP, AGDK…GASK, and PGSR…KKAV. The segment covering 535 to 548 has biased composition (low complexity); that stretch reads SLTQQLAATQQSLT. Gly residues predominate over residues 1205–1220; it reads DGGGGGAMANGNGSGG. The span at 1227–1236 shows a compositional bias: acidic residues; the sequence is DGEPEDGEGD. Positions 1260 to 1271 are enriched in gly residues; the sequence is GRGGRGGRGGAA. The span at 1272 to 1282 shows a compositional bias: acidic residues; the sequence is GEDEDEDEDAG. The segment covering 1287–1304 has biased composition (low complexity); that stretch reads RGKSSSSSKASSGRRSSS. Acidic residues predominate over residues 1321-1335; sequence VPDDDDADAEAEAAA. Residues 1373–1414 are compositionally biased toward low complexity; the sequence is PQSQNPTPSQSQSGQAPAASAPSDGASGAAAAAETAASSGPA. Composition is skewed to pro residues over residues 1720 to 1731 and 1896 to 1912; these read TPAPGIKPPATP and SRPP…PAPE. A compositionally biased stretch (low complexity) spans 1913 to 1929; that stretch reads PVAASGPGAGAAGVKKL. The segment covering 1930-1940 has biased composition (pro residues); that stretch reads VPPPSPPKKAV.

This sequence belongs to the CFAP74 family. As to quaternary structure, part of the PDCP1 complex composed of CFAP46, CFAP54, CFAP74 and CFAP221; the PDCP1 complex binds calmodulin.

It is found in the cytoplasm. Its subcellular location is the cytoskeleton. The protein resides in the cilium axoneme. Functionally, as part of the central apparatus of the cilium axoneme may play a role in cilium movement and thereby cell motility. This Chlamydomonas reinhardtii (Chlamydomonas smithii) protein is Cilia- and flagella-associated protein 74.